Here is a 728-residue protein sequence, read N- to C-terminus: Catalase-peroxidase 1 (728 aa).

The tryptophyl-tyrosyl-methioninium (Trp-Tyr) (with M-244) cross-link spans 91-218 (WHSAGTYRIA…LAAVQMGLIY (128 aa)). His-92 (proton acceptor) is an active-site residue. The tryptophyl-tyrosyl-methioninium (Tyr-Met) (with W-91) cross-link spans 218 to 244 (YVNPEGPDGNPDPVAAARDIRDTFARM). A heme b-binding site is contributed by His-259.

This sequence belongs to the peroxidase family. Peroxidase/catalase subfamily. In terms of assembly, homodimer or homotetramer. Heme b serves as cofactor. Formation of the three residue Trp-Tyr-Met cross-link is important for the catalase, but not the peroxidase activity of the enzyme.

The catalysed reaction is H2O2 + AH2 = A + 2 H2O. The enzyme catalyses 2 H2O2 = O2 + 2 H2O. Bifunctional enzyme with both catalase and broad-spectrum peroxidase activity. The protein is Catalase-peroxidase 1 of Burkholderia ambifaria (strain ATCC BAA-244 / DSM 16087 / CCUG 44356 / LMG 19182 / AMMD) (Burkholderia cepacia (strain AMMD)).